The following is a 171-amino-acid chain: 3-hydroxydecanoyl-[acyl-carrier-protein] dehydratase (171 aa).

His70 is a catalytic residue.

It belongs to the thioester dehydratase family. FabA subfamily. As to quaternary structure, homodimer.

It localises to the cytoplasm. The enzyme catalyses a (3R)-hydroxyacyl-[ACP] = a (2E)-enoyl-[ACP] + H2O. It carries out the reaction (3R)-hydroxydecanoyl-[ACP] = (2E)-decenoyl-[ACP] + H2O. The catalysed reaction is (2E)-decenoyl-[ACP] = (3Z)-decenoyl-[ACP]. Its pathway is lipid metabolism; fatty acid biosynthesis. Functionally, necessary for the introduction of cis unsaturation into fatty acids. Catalyzes the dehydration of (3R)-3-hydroxydecanoyl-ACP to E-(2)-decenoyl-ACP and then its isomerization to Z-(3)-decenoyl-ACP. Can catalyze the dehydratase reaction for beta-hydroxyacyl-ACPs with saturated chain lengths up to 16:0, being most active on intermediate chain length. The sequence is that of 3-hydroxydecanoyl-[acyl-carrier-protein] dehydratase from Methylobacillus flagellatus (strain ATCC 51484 / DSM 6875 / VKM B-1610 / KT).